The sequence spans 258 residues: Imidazole glycerol phosphate synthase subunit HisF (258 aa).

Residues Asp-12 and Asp-131 contribute to the active site.

Belongs to the HisA/HisF family. As to quaternary structure, heterodimer of HisH and HisF.

The protein resides in the cytoplasm. It carries out the reaction 5-[(5-phospho-1-deoxy-D-ribulos-1-ylimino)methylamino]-1-(5-phospho-beta-D-ribosyl)imidazole-4-carboxamide + L-glutamine = D-erythro-1-(imidazol-4-yl)glycerol 3-phosphate + 5-amino-1-(5-phospho-beta-D-ribosyl)imidazole-4-carboxamide + L-glutamate + H(+). Its pathway is amino-acid biosynthesis; L-histidine biosynthesis; L-histidine from 5-phospho-alpha-D-ribose 1-diphosphate: step 5/9. Its function is as follows. IGPS catalyzes the conversion of PRFAR and glutamine to IGP, AICAR and glutamate. The HisF subunit catalyzes the cyclization activity that produces IGP and AICAR from PRFAR using the ammonia provided by the HisH subunit. The protein is Imidazole glycerol phosphate synthase subunit HisF of Arthrobacter sp. (strain FB24).